We begin with the raw amino-acid sequence, 268 residues long: Short chain dehydrogenase/reductase dpchG (268 aa).

Positions 18, 70, 97, 131, 165, and 169 each coordinate NADP(+). Y165 acts as the Proton acceptor in catalysis. K169 (lowers pKa of active site Tyr) is an active-site residue.

It belongs to the short-chain dehydrogenases/reductases (SDR) family.

Its pathway is secondary metabolite biosynthesis; terpenoid biosynthesis. Its function is as follows. Short chain dehydrogenase/reductase; part of the gene cluster that mediates the biosynthesis of the diterpenoid pyrones higginsianins A and B. The first step of the pathway is the synthesis of the alpha-pyrone moiety by the polyketide synthase dpchA via condensation of one acetyl-CoA starter unit with 3 malonyl-CoA units and 2 methylations. The alpha-pyrone is then combined with geranylgeranyl pyrophosphate (GGPP) formed by the GGPP synthase dpchD through the action of the prenyltransferase dpchC to yield a linear alpha-pyrone diterpenoid. Subsequent steps in the diterpenoid pyrone biosynthetic pathway involve the decalin core formation, which is initiated by the epoxidation of the C10-C11 olefin by the FAD-dependent oxidoreductase dpchE, and is followed by a cyclization cascade catalyzed by the terpene cyclase dpchB. The short chain dehydrogenase/reductase dpchG then oxidizes the 8S hydroxy group to a ketone and the short chain dehydrogenase/reductase dpchH reduces the ketone to the 8R hydroxy group to yield higginsianin B. Finally, the FAD-dependent oxidoreductase dpchF converts higginsianin B into higginsianin A. This Colletotrichum higginsianum (strain IMI 349063) (Crucifer anthracnose fungus) protein is Short chain dehydrogenase/reductase dpchG.